Consider the following 349-residue polypeptide: N-formyl peptide receptor 3 (349 aa).

Topologically, residues 1–27 are extracellular; the sequence is METNFSIPLNETEEVLPEPAGHTVLWI. N-linked (GlcNAc...) asparagine glycosylation is found at Asn4 and Asn10. A helical transmembrane segment spans residues 28–50; sequence FSLLVHGVTFIFGVLGNGLVIWV. At 51–61 the chain is on the cytoplasmic side; that stretch reads AGFLMTRTVNT. A helical membrane pass occupies residues 62–83; the sequence is ICYLNLALADFSFSAILPFHMV. The Extracellular segment spans residues 84-100; sequence SVAMREKWPFGSFLCKL. A disulfide bridge links Cys98 with Cys176. Residues 101–121 form a helical membrane-spanning segment; sequence VHVMIDINLFVSVYLITIIAL. The Cytoplasmic portion of the chain corresponds to 122 to 140; that stretch reads DRCICVLHPAWAQNHRTMS. The helical transmembrane segment at 141 to 162 threads the bilayer; it reads LAKRVMTGLWILTIVLTLPNFI. At 163 to 205 the chain is on the extracellular side; it reads FWTTISTTNGDTYCIFNFPFWGDTAVERLNVFITMAKVFLILH. The helical transmembrane segment at 206–226 threads the bilayer; the sequence is FIIGFSMPMSIITVCYGIIAA. The Cytoplasmic segment spans residues 227 to 242; sequence KIHRNHMIKSSRPLRV. The chain crosses the membrane as a helical span at residues 243–266; it reads FAAVVASFFICWFPYELIGILMAV. Topologically, residues 267–286 are extracellular; the sequence is WLKEMLLNGKYKIILVLINP. A helical transmembrane segment spans residues 287-306; that stretch reads TSSLAFFNSCLNPILYVFLG. At 307-349 the chain is on the cytoplasmic side; sequence SNFQERLIRSLPTSLERALTEVPDSAQTSNTHTTSASPPEETE. The tract at residues 327-349 is disordered; the sequence is EVPDSAQTSNTHTTSASPPEETE. Over residues 331–343 the composition is skewed to polar residues; that stretch reads SAQTSNTHTTSAS.

This sequence belongs to the G-protein coupled receptor 1 family.

It is found in the cell membrane. Its function is as follows. Low affinity receptor for N-formyl-methionyl peptides, which are powerful neutrophils chemotactic factors. Binding of FMLP to the receptor causes activation of neutrophils. This response is mediated via a G-protein that activates a phosphatidylinositol-calcium second messenger system. The chain is N-formyl peptide receptor 3 (FPR3) from Gorilla gorilla gorilla (Western lowland gorilla).